The primary structure comprises 217 residues: Small ribosomal subunit protein uS3 (217 aa).

The KH type-2 domain occupies 38–106; sequence IRKYIDNALQ…KVHINVIEIK (69 aa).

The protein belongs to the universal ribosomal protein uS3 family. In terms of assembly, part of the 30S ribosomal subunit. Forms a tight complex with proteins S10 and S14.

Its function is as follows. Binds the lower part of the 30S subunit head. Binds mRNA in the 70S ribosome, positioning it for translation. The sequence is that of Small ribosomal subunit protein uS3 from Staphylococcus saprophyticus subsp. saprophyticus (strain ATCC 15305 / DSM 20229 / NCIMB 8711 / NCTC 7292 / S-41).